The sequence spans 243 residues: NAD-dependent protein deacetylase (243 aa).

The Deacetylase sirtuin-type domain occupies 1–243; that stretch reads MKHDLETLKH…VSVVKSLMTE (243 aa). The NAD(+) site is built by Ala24, Phe35, Arg36, Gln105, Ile107, Asp108, and His123. Phe35 lines the nicotinamide pocket. Nicotinamide-binding residues include Ile107 and Asp108. The Proton acceptor role is filled by His123. Zn(2+)-binding residues include Cys131, Cys134, Cys151, and Cys154. Ser192, Ser193, Asn215, and Asp232 together coordinate NAD(+).

This sequence belongs to the sirtuin family. Class U subfamily. Zn(2+) is required as a cofactor.

It is found in the cytoplasm. It catalyses the reaction N(6)-acetyl-L-lysyl-[protein] + NAD(+) + H2O = 2''-O-acetyl-ADP-D-ribose + nicotinamide + L-lysyl-[protein]. Its function is as follows. NAD-dependent protein deacetylase which modulates the activities of several enzymes which are inactive in their acetylated form. This chain is NAD-dependent protein deacetylase, found in Staphylococcus aureus (strain MRSA252).